Consider the following 192-residue polypeptide: Ribosome maturation factor RimP (192 aa).

This sequence belongs to the RimP family.

The protein localises to the cytoplasm. In terms of biological role, required for maturation of 30S ribosomal subunits. This chain is Ribosome maturation factor RimP, found in Mycobacterium sp. (strain JLS).